Reading from the N-terminus, the 368-residue chain is Probable protein phosphatase 2C 58 (368 aa).

The PPM-type phosphatase domain maps to 23-329 (KFGLSSMQGW…DNMTMILVQF (307 aa)). Mn(2+) contacts are provided by Asp-57, Gly-58, Asp-272, and Asp-320. The tract at residues 336–368 (NKNVSPAEQSAADKQPTGDTHWSEIHVTEESSS) is disordered. Residues 356–368 (HWSEIHVTEESSS) are compositionally biased toward basic and acidic residues.

The protein belongs to the PP2C family. Mg(2+) is required as a cofactor. Mn(2+) serves as cofactor.

It carries out the reaction O-phospho-L-seryl-[protein] + H2O = L-seryl-[protein] + phosphate. The enzyme catalyses O-phospho-L-threonyl-[protein] + H2O = L-threonyl-[protein] + phosphate. The chain is Probable protein phosphatase 2C 58 from Oryza sativa subsp. japonica (Rice).